A 396-amino-acid polypeptide reads, in one-letter code: Elongation factor Tu 1 (396 aa).

The tr-type G domain maps to 10-206 (KPHCNIGTIG…AVDAYIPQPE (197 aa)). The tract at residues 19–26 (GHVDHGKT) is G1. Residue 19 to 26 (GHVDHGKT) coordinates GTP. Residue Thr-26 coordinates Mg(2+). Positions 60 to 64 (GITIS) are G2. A G3 region spans residues 81–84 (DCPG). GTP is bound by residues 81-85 (DCPGH) and 136-139 (NKCD). The interval 136–139 (NKCD) is G4. A G5 region spans residues 174–176 (SAL).

It belongs to the TRAFAC class translation factor GTPase superfamily. Classic translation factor GTPase family. EF-Tu/EF-1A subfamily. In terms of assembly, monomer.

The protein localises to the cytoplasm. It carries out the reaction GTP + H2O = GDP + phosphate + H(+). Its function is as follows. GTP hydrolase that promotes the GTP-dependent binding of aminoacyl-tRNA to the A-site of ribosomes during protein biosynthesis. This is Elongation factor Tu 1 from Rhodopseudomonas palustris (strain BisB5).